A 570-amino-acid chain; its full sequence is Set1/Ash2 histone methyltransferase complex subunit ash-2 (570 aa).

The PHD-type zinc-finger motif lies at 19–76 (TTVCYCDGKRELGSVEVVCSTCLKWFHGRCLKEFHELNSNGVPFMICYTFTCKQCRPT). The segment at 201–242 (NREPRHIELPPIEGPKTRGASKRRHAEAPVTGKKQKLAADYS) is disordered. Positions 270–468 (PNVPEDPAWN…TLVEMPGSYI (199 aa)) constitute a B30.2/SPRY domain.

Component of the SET2 complex (also known as the SET1/COMPASS complex), which contains at least set-2, swd-2.1, cfp-1, rbbp-5, wdr-5.1, dpy-30 and ash-2. Within the complex, interacts with cfp-1 and wdr-5.1. Expressed in somatic and germline tissues (at protein level).

Its subcellular location is the nucleus. In terms of biological role, component of the set-2/ash-2 histone methyltransferase (HMT) complex. Required for the di- and trimethylation at 'Lys-4' of histone H3, a mark associated with epigenetic transcriptional activation. Implicated in the epigenetic inheritance of lifespan over several generations. Functions as a transcriptional regulator. Acts in the germline to limit the longevity of the soma, probably by regulating a lipid metabolism pathway that signals from the germline to the intestine, thereby preventing accumulation of mono-unsaturated fatty acids. The protein is Set1/Ash2 histone methyltransferase complex subunit ash-2 of Caenorhabditis elegans.